The following is a 275-amino-acid chain: Large ribosomal subunit protein uL2 (275 aa).

A disordered region spans residues 223–275 (VVMNPVDHPHGGGEGKSSGGRHPVSPWGMPTKGYKTRKNKGTDQYIVRRRNKK).

It belongs to the universal ribosomal protein uL2 family. As to quaternary structure, part of the 50S ribosomal subunit. Forms a bridge to the 30S subunit in the 70S ribosome.

Functionally, one of the primary rRNA binding proteins. Required for association of the 30S and 50S subunits to form the 70S ribosome, for tRNA binding and peptide bond formation. It has been suggested to have peptidyltransferase activity; this is somewhat controversial. Makes several contacts with the 16S rRNA in the 70S ribosome. The chain is Large ribosomal subunit protein uL2 from Psychromonas ingrahamii (strain DSM 17664 / CCUG 51855 / 37).